A 362-amino-acid chain; its full sequence is Peptide chain release factor 2 (362 aa).

N5-methylglutamine is present on Q250.

It belongs to the prokaryotic/mitochondrial release factor family. Post-translationally, methylated by PrmC. Methylation increases the termination efficiency of RF2.

It is found in the cytoplasm. In terms of biological role, peptide chain release factor 2 directs the termination of translation in response to the peptide chain termination codons UGA and UAA. The protein is Peptide chain release factor 2 of Clostridium perfringens (strain ATCC 13124 / DSM 756 / JCM 1290 / NCIMB 6125 / NCTC 8237 / Type A).